The sequence spans 165 residues: ER membrane protein complex subunit 5 (165 aa).

The Cytoplasmic portion of the chain corresponds to 1–3 (MAP). The helical transmembrane segment at 4–22 (SLWKGLVGIGLFALAHAAF) threads the bilayer. The Lumenal segment spans residues 23–77 (SAAQHYFPSSGIKWKRKCEFLQSSSFQDKIFRSMYYVYDRSYMRLTEKEDESLPI). A helical transmembrane segment spans residues 78-97 (DIVLQTLLAFAVTCYGIVHI). The Cytoplasmic portion of the chain corresponds to 98–165 (AGEFKDMDAT…KLRKLESLRR (68 aa)). Position 154 is a phosphoserine (Ser154).

Belongs to the membrane magnesium transporter (TC 1.A.67) family. Component of the ER membrane protein complex (EMC).

The protein localises to the endoplasmic reticulum membrane. It localises to the golgi apparatus membrane. It is found in the early endosome membrane. Its function is as follows. Part of the endoplasmic reticulum membrane protein complex (EMC) that enables the energy-independent insertion into endoplasmic reticulum membranes of newly synthesized membrane proteins. Preferentially accommodates proteins with transmembrane domains that are weakly hydrophobic or contain destabilizing features such as charged and aromatic residues. Involved in the cotranslational insertion of multi-pass membrane proteins in which stop-transfer membrane-anchor sequences become ER membrane spanning helices. It is also required for the post-translational insertion of tail-anchored/TA proteins in endoplasmic reticulum membranes. By mediating the proper cotranslational insertion of N-terminal transmembrane domains in an N-exo topology, with translocated N-terminus in the lumen of the ER, controls the topology of multi-pass membrane proteins like the G protein-coupled receptors. By regulating the insertion of various proteins in membranes, it is indirectly involved in many cellular processes. May be involved in Mg(2+) transport. The chain is ER membrane protein complex subunit 5 from Bos taurus (Bovine).